Consider the following 581-residue polypeptide: Pre-mRNA 3'-end-processing factor FIP1 (581 aa).

Composition is skewed to basic and acidic residues over residues 1–10 and 32–42; these read MSAGEVERLV and VHVHSDLAKDL. 3 disordered regions span residues 1 to 95, 211 to 282, and 320 to 581; these read MSAG…EDDV, TVQQ…ESPD, and RSAT…APAE. The sufficient for interaction with PAPOLA stretch occupies residues 1-110; sequence MSAGEVERLV…DIKTGAPQYG (110 aa). The necessary for stimulating PAPOLA activity stretch occupies residues 1-332; sequence MSAGEVERLV…TEVDNNFSKP (332 aa). Acidic residues-rich tracts occupy residues 43-54 and 80-94; these read DENEVERPEEEN and TEDDSDSDSDDDEDD. 3 positions are modified to phosphoserine: serine 84, serine 86, and serine 88. The sufficient for interaction with CPSF4 stretch occupies residues 136 to 219; it reads KGVDLDAPGS…ITVQQGRTGN (84 aa). Low complexity predominate over residues 247–267; sequence SRNSTSSQSQTSTASRKASSS. A compositionally biased stretch (basic and acidic residues) spans 271–282; that stretch reads WQDRYGRAESPD. Serine 280 is subject to Phosphoserine. Positions 320-330 are enriched in polar residues; sequence RSATEVDNNFS. The segment covering 331–389 has biased composition (pro residues); it reads KPPPFFPPGAPPTHLPPPPFLPPPPTVSTAPPLIPPPGIPITVPPPGFPPPPGAPPPSL. Tyrosine 411 is modified (phosphotyrosine). Positions 419–435 are enriched in polar residues; the sequence is LTSSAPSWPSLVDTTKQ. Residues 428 to 581 form a sufficient for interaction with CPSF1 and CSTF3 region; that stretch reads SLVDTTKQWD…QESTEAAPAE (154 aa). Positions 439-479 are enriched in basic and acidic residues; it reads YARREKDRDRDRERDRDRERERDRDRERERTRERERERDHS. The arg/Asp/Glu-rich domain stretch occupies residues 442–477; that stretch reads REKDRDRDRERDRDRERERDRDRERERTRERERERD. Residues 478 to 535 are sufficient for interaction with AHCYL1; that stretch reads HSPTPSVFNSDEERYRYREYAERGYERHRASREKEERHRERRHREKEETRHKSSRSNS. Serine 479 carries the post-translational modification Phosphoserine. Threonine 481 bears the Phosphothreonine mark. Residues serine 483 and serine 487 each carry the phosphoserine modification. A compositionally biased stretch (basic and acidic residues) spans 488–515; sequence DEERYRYREYAERGYERHRASREKEERH. The segment covering 529–538 has biased composition (basic residues); that stretch reads KSSRSNSRRR. A Phosphoserine modification is found at serine 541. The segment covering 547–557 has biased composition (basic residues); it reads HRRHKHKKSKR.

The protein belongs to the FIP1 family. As to quaternary structure, component of the cleavage and polyadenylation specificity factor (CPSF) complex, composed of CPSF1, CPSF2, CPSF3, CPSF4 and FIP1L1. Found in a complex with CPSF1, FIP1L1 and PAPOLA. Interacts with CPSF1, CPSF4, CSTF2 and CSTF3. Interacts with AHCYL1 (when phosphorylated); the interaction is direct and associates AHCYL1 with the CPSF complex and RNA. Interacts with PAPOLA; the interaction seems to be increased by the interaction with AHCYL1. Interacts with NUDT21/CPSF5; this interaction occurs in a RNA sequence-specific manner. Interacts (preferentially via unphosphorylated form and Arg/Glu/Asp-rich domain) with CPSF6 (via Arg/Ser-rich domain); this interaction mediates, at least in part, the interaction between the CFIm and CPSF complexes and may be inhibited by CPSF6 hyper-phosphorylation. Interacts (preferentially via unphosphorylated form and Arg/Asp/Glu-rich domain) with CPSF7 (via Arg/Ser-rich domain); this interaction mediates, at least in part, the interaction between the CFIm and CPSF complexes and may be inhibited by CPSF7 hyper-phosphorylation.

It is found in the nucleus. Its function is as follows. Component of the cleavage and polyadenylation specificity factor (CPSF) complex that plays a key role in pre-mRNA 3'-end formation, recognizing the AAUAAA signal sequence and interacting with poly(A) polymerase and other factors to bring about cleavage and poly(A) addition. FIP1L1 contributes to poly(A) site recognition and stimulates poly(A) addition. Binds to U-rich RNA sequence elements surrounding the poly(A) site. May act to tether poly(A) polymerase to the CPSF complex. The sequence is that of Pre-mRNA 3'-end-processing factor FIP1 (Fip1l1) from Mus musculus (Mouse).